The sequence spans 390 residues: Pyruvate dehydrogenase E1 component subunit alpha, somatic form, mitochondrial (390 aa).

The transit peptide at 1-29 (MRKMLAAVSRVLSGVAQKPASRVLVASRH) directs the protein to the mitochondrion. Lys63 carries the N6-acetyllysine; alternate modification. Lys63 is modified (N6-succinyllysine; alternate). The pyruvate site is built by His92, Tyr118, Arg119, Ala157, Gly165, Val167, Asp196, Gly197, Ala198, Asn225, and Tyr227. The thiamine diphosphate site is built by Tyr118 and Arg119. Thiamine diphosphate is bound by residues Gly165, Val167, Asp196, Gly197, Ala198, and Asn225. Asp196 is a Mg(2+) binding site. 2 residues coordinate Mg(2+): Asn225 and Tyr227. Ser232 bears the Phosphoserine; by PDK1 mark. Position 244 is an N6-acetyllysine; alternate (Lys244). Lys244 is modified (N6-succinyllysine; alternate). Lys267 carries the post-translational modification N6-acetyllysine. An N6-succinyllysine modification is found at Lys277. His292 serves as a coordination point for thiamine diphosphate. Ser293 is modified (phosphoserine; by PDK1, PDK2, PDK3 and PDK4). Ser295 bears the Phosphoserine mark. Ser300 is modified (phosphoserine; by PDK1, PDK2, PDK3 and PDK4). Residue Tyr301 is modified to Phosphotyrosine. N6-acetyllysine; alternate is present on Lys313. Lys313 carries the N6-succinyllysine; alternate modification. 2 positions are modified to N6-acetyllysine: Lys321 and Lys336. An N6-succinyllysine modification is found at Lys385.

As to quaternary structure, heterotetramer of two PDHA1 and two PDHB subunits. The heterotetramer interacts with DLAT, and is part of the multimeric pyruvate dehydrogenase complex that contains multiple copies of pyruvate dehydrogenase (E1), dihydrolipoamide acetyltransferase (DLAT, E2) and lipoamide dehydrogenase (DLD, E3). These subunits are bound to an inner core composed of about 48 DLAT and 12 PDHX molecules. The cofactor is thiamine diphosphate. Requires Mg(2+) as cofactor. In terms of processing, phosphorylation at Ser-232, Ser-293 and Ser-300 by PDK family kinases inactivates the enzyme; for this phosphorylation at a single site is sufficient. Phosphorylation at Ser-293 interferes with access to active site, and thereby inactivates the enzyme. Dephosphorylation at all three sites, i.e. at Ser-232, Ser-293 and Ser-300, is required for reactivation. Post-translationally, acetylation alters the phosphorylation pattern. Deacetylated by SIRT3.

It is found in the mitochondrion matrix. The enzyme catalyses N(6)-[(R)-lipoyl]-L-lysyl-[protein] + pyruvate + H(+) = N(6)-[(R)-S(8)-acetyldihydrolipoyl]-L-lysyl-[protein] + CO2. Its activity is regulated as follows. Pyruvate dehydrogenase activity is inhibited by phosphorylation of PDHA1; it is reactivated by dephosphorylation. Functionally, the pyruvate dehydrogenase complex catalyzes the overall conversion of pyruvate to acetyl-CoA and CO(2), and thereby links the glycolytic pathway to the tricarboxylic cycle. This chain is Pyruvate dehydrogenase E1 component subunit alpha, somatic form, mitochondrial (PDHA1), found in Bos taurus (Bovine).